The following is a 563-amino-acid chain: Cytochrome P450 monooxygenase efuG (563 aa).

A helical transmembrane segment spans residues 10-30; sequence ITSHQWGIGSVFLLISIPLIV. The tract at residues 462–482 is disordered; it reads PDDPQSGPRKDAKKQKAKSDG. Residue cysteine 505 coordinates heme.

The protein belongs to the cytochrome P450 family. It depends on heme as a cofactor.

It is found in the membrane. It functions in the pathway secondary metabolite biosynthesis; terpenoid biosynthesis. Functionally, cytochrome P450 monooxygenase; part of the gene cluster that mediates the biosynthesis of enfumafungin, a glycosylated fernene-type triterpenoid with potent antifungal activity, mediated by its interaction with beta-1,3-glucan synthase and the fungal cell wall. The pathway begins with the terpene cyclase-glycosyl transferase fusion protein that most likely uses 2,3-oxidosqualene as substrate and catalyzes glycosylation immediately after cyclization. The fernene glycoside then could be processed by the desaturase efuI which catalyzes isomerization of a double bond established by efuA to form the core structure. The latter would then undergo a series of hydroxylations in unknown order at C-2, C-19, C-23 and C-25, which would be catalyzed by two of the three cytochrome P450 monooxygenases efuB, efuG or efuH. The hydroxy-group at C-25 becomes oxidized by the dehydrogenase efuE to enable a spontaneous, non-enzymatic hemiacetal formation with C-23. After hydroxylation at C-2, acetylation by the acetyltransferase efuC takes place. The final steps in enfumafungin biosynthesis require expansion of the 5-membered ring by lactonization via a Baeyer-Villiger reaction mediated by one of the BGC's cytochrome P450 monooxygenases (efuB, efuG or efuH) followed by ring cleavage. This type of reaction would establish a double bond between C-20 and C-21 which could be reduced by the reductase efuL to form the final product. The sequence is that of Cytochrome P450 monooxygenase efuG from Hormonema carpetanum.